A 249-amino-acid polypeptide reads, in one-letter code: 5'-nucleotidase SurE (249 aa).

4 residues coordinate a divalent metal cation: Asp8, Asp9, Ser39, and Asn91.

Belongs to the SurE nucleotidase family. The cofactor is a divalent metal cation.

Its subcellular location is the cytoplasm. The catalysed reaction is a ribonucleoside 5'-phosphate + H2O = a ribonucleoside + phosphate. Nucleotidase that shows phosphatase activity on nucleoside 5'-monophosphates. This Haemophilus influenzae (strain PittEE) protein is 5'-nucleotidase SurE.